Consider the following 194-residue polypeptide: Peptidyl-tRNA hydrolase (194 aa).

Tyr17 is a tRNA binding site. Catalysis depends on His22, which acts as the Proton acceptor. 3 residues coordinate tRNA: Tyr68, Asn70, and Asn116.

It belongs to the PTH family. As to quaternary structure, monomer.

The protein localises to the cytoplasm. The enzyme catalyses an N-acyl-L-alpha-aminoacyl-tRNA + H2O = an N-acyl-L-amino acid + a tRNA + H(+). Its function is as follows. Hydrolyzes ribosome-free peptidyl-tRNAs (with 1 or more amino acids incorporated), which drop off the ribosome during protein synthesis, or as a result of ribosome stalling. Catalyzes the release of premature peptidyl moieties from peptidyl-tRNA molecules trapped in stalled 50S ribosomal subunits, and thus maintains levels of free tRNAs and 50S ribosomes. The protein is Peptidyl-tRNA hydrolase of Pseudomonas paraeruginosa (strain DSM 24068 / PA7) (Pseudomonas aeruginosa (strain PA7)).